A 671-amino-acid polypeptide reads, in one-letter code: E3 ubiquitin-protein ligase pub2 (671 aa).

The C2 domain maps to 1-112 (MENIRFEVQL…KDDYKTRITL (112 aa)). Residues 242–275 (GPLPAGWEMRLSEDYHVYFVDHSTKTTTWSDPRD) enclose the WW domain. Positions 338-671 (SVSDMKKKLL…IQETAGFGTE (334 aa)) constitute an HECT domain. Cys639 serves as the catalytic Glycyl thioester intermediate.

As to quaternary structure, interacts with the E2 ubiquitin-conjugating enzyme ubc4.

It localises to the membrane. It is found in the cytoplasm. The enzyme catalyses S-ubiquitinyl-[E2 ubiquitin-conjugating enzyme]-L-cysteine + [acceptor protein]-L-lysine = [E2 ubiquitin-conjugating enzyme]-L-cysteine + N(6)-ubiquitinyl-[acceptor protein]-L-lysine.. It functions in the pathway protein modification; protein ubiquitination. In terms of biological role, E3 ubiquitin-protein ligase which accepts ubiquitin from an E2 ubiquitin-conjugating enzyme in the form of a thioester and then directly transfers the ubiquitin to targeted substrates. The protein is E3 ubiquitin-protein ligase pub2 (pub2) of Schizosaccharomyces pombe (strain 972 / ATCC 24843) (Fission yeast).